Reading from the N-terminus, the 159-residue chain is uncharacterized protein (159 aa).

A helical membrane pass occupies residues 4–24 (QIALILSLIILIFFIYKFAMF).

It is found in the membrane. This is an uncharacterized protein from Acheta domesticus (House cricket).